We begin with the raw amino-acid sequence, 320 residues long: o-succinylbenzoate synthase (320 aa).

K133 acts as the Proton donor in catalysis. Mg(2+) contacts are provided by D161, E190, and D213. K235 (proton acceptor) is an active-site residue.

Belongs to the mandelate racemase/muconate lactonizing enzyme family. MenC type 1 subfamily. A divalent metal cation serves as cofactor.

It catalyses the reaction (1R,6R)-6-hydroxy-2-succinyl-cyclohexa-2,4-diene-1-carboxylate = 2-succinylbenzoate + H2O. Its pathway is quinol/quinone metabolism; 1,4-dihydroxy-2-naphthoate biosynthesis; 1,4-dihydroxy-2-naphthoate from chorismate: step 4/7. It participates in quinol/quinone metabolism; menaquinone biosynthesis. In terms of biological role, converts 2-succinyl-6-hydroxy-2,4-cyclohexadiene-1-carboxylate (SHCHC) to 2-succinylbenzoate (OSB). The protein is o-succinylbenzoate synthase of Escherichia coli O9:H4 (strain HS).